Here is an 89-residue protein sequence, read N- to C-terminus: Large ribosomal subunit protein bL27 (89 aa).

Belongs to the bacterial ribosomal protein bL27 family.

This Bacteroides thetaiotaomicron (strain ATCC 29148 / DSM 2079 / JCM 5827 / CCUG 10774 / NCTC 10582 / VPI-5482 / E50) protein is Large ribosomal subunit protein bL27.